Reading from the N-terminus, the 218-residue chain is Monomethylamine corrinoid protein 2 (218 aa).

The B12-binding N-terminal domain occupies 1–91; the sequence is MTNTEIFNKL…ELEKTKVEGE (91 aa). Residues 94–218 enclose the B12-binding domain; that stretch reads TGLAITFVAE…AAKVALNVMK (125 aa). Histidine 107 is a methylcob(III)alamin binding site.

It belongs to the methylamine corrinoid protein family. Can form a complex with MtmB.

It participates in one-carbon metabolism; methanogenesis from methylamine. In terms of biological role, acts as a methyl group carrier between MtmB and MtbA. This chain is Monomethylamine corrinoid protein 2 (mtmC2), found in Methanosarcina mazei (strain ATCC BAA-159 / DSM 3647 / Goe1 / Go1 / JCM 11833 / OCM 88) (Methanosarcina frisia).